The chain runs to 329 residues: 4-hydroxythreonine-4-phosphate dehydrogenase (329 aa).

Positions 136 and 137 each coordinate substrate. The a divalent metal cation site is built by His-166, His-211, and His-266. Positions 274, 283, and 292 each coordinate substrate.

This sequence belongs to the PdxA family. Homodimer. The cofactor is Zn(2+). It depends on Mg(2+) as a cofactor. Co(2+) serves as cofactor.

The protein resides in the cytoplasm. The catalysed reaction is 4-(phosphooxy)-L-threonine + NAD(+) = 3-amino-2-oxopropyl phosphate + CO2 + NADH. It participates in cofactor biosynthesis; pyridoxine 5'-phosphate biosynthesis; pyridoxine 5'-phosphate from D-erythrose 4-phosphate: step 4/5. In terms of biological role, catalyzes the NAD(P)-dependent oxidation of 4-(phosphooxy)-L-threonine (HTP) into 2-amino-3-oxo-4-(phosphooxy)butyric acid which spontaneously decarboxylates to form 3-amino-2-oxopropyl phosphate (AHAP). The chain is 4-hydroxythreonine-4-phosphate dehydrogenase from Escherichia coli O6:H1 (strain CFT073 / ATCC 700928 / UPEC).